A 465-amino-acid chain; its full sequence is Cysteine--tRNA ligase (465 aa).

C28 lines the Zn(2+) pocket. A 'HIGH' region motif is present at residues 30–40; it reads MTVYDYCHLGH. C209, H234, and E238 together coordinate Zn(2+). The short motif at 266 to 270 is the 'KMSKS' region element; sequence KMSKS. K269 is an ATP binding site.

Belongs to the class-I aminoacyl-tRNA synthetase family. In terms of assembly, monomer. The cofactor is Zn(2+).

It is found in the cytoplasm. It carries out the reaction tRNA(Cys) + L-cysteine + ATP = L-cysteinyl-tRNA(Cys) + AMP + diphosphate. This Nitrosomonas europaea (strain ATCC 19718 / CIP 103999 / KCTC 2705 / NBRC 14298) protein is Cysteine--tRNA ligase.